Reading from the N-terminus, the 693-residue chain is Sulfite reductase 1 [ferredoxin], chloroplastic (693 aa).

The transit peptide at 1–62 (MTTSFGAAIN…PSSIVRAVST (62 aa)) directs the protein to the chloroplast. The [4Fe-4S] cluster site is built by C502, C508, C548, and C552. C552 is a siroheme binding site.

The protein belongs to the nitrite and sulfite reductase 4Fe-4S domain family. As to quaternary structure, monomer. Interacts with ferredoxin. Siroheme serves as cofactor. It depends on [4Fe-4S] cluster as a cofactor. Post-translationally, phosphorylated; this phosphorylation reduces DNA-binding. In terms of tissue distribution, expressed in leaves, stems, roots and petals.

It is found in the plastid. It localises to the chloroplast stroma. The protein resides in the chloroplast nucleoid. Its subcellular location is the plastid stroma. The enzyme catalyses hydrogen sulfide + 6 oxidized [2Fe-2S]-[ferredoxin] + 3 H2O = sulfite + 6 reduced [2Fe-2S]-[ferredoxin] + 7 H(+). Functionally, essential protein with sulfite reductase activity required in assimilatory sulfate reduction pathway during both primary and secondary metabolism and thus involved in development and growth. DNA-binding protein that binds to both double-stranded and single-stranded DNA without significant sequence specificity to reversibly repress the transcriptional activity of chloroplast nucleoids by promoting DNA compaction and possibly regulate DNA replication. The chain is Sulfite reductase 1 [ferredoxin], chloroplastic (SIR1) from Nicotiana tabacum (Common tobacco).